A 263-amino-acid chain; its full sequence is tRNA1(Val) (adenine(37)-N6)-methyltransferase (263 aa).

This sequence belongs to the methyltransferase superfamily. tRNA (adenine-N(6)-)-methyltransferase family.

The protein resides in the cytoplasm. It catalyses the reaction adenosine(37) in tRNA1(Val) + S-adenosyl-L-methionine = N(6)-methyladenosine(37) in tRNA1(Val) + S-adenosyl-L-homocysteine + H(+). Functionally, specifically methylates the adenine in position 37 of tRNA(1)(Val) (anticodon cmo5UAC). The polypeptide is tRNA1(Val) (adenine(37)-N6)-methyltransferase (Salmonella choleraesuis (strain SC-B67)).